Reading from the N-terminus, the 482-residue chain is Catalase (482 aa).

Residues 1 to 23 (MSQNKTLTTASGPPVADNQNSRS) are compositionally biased toward polar residues. The tract at residues 1–28 (MSQNKTLTTASGPPVADNQNSRSAGPRG) is disordered. Active-site residues include His55 and Asn128. Tyr338 provides a ligand contact to heme. The segment at 370 to 395 (SMAFGSNGGAAPNYEPNSYADAPKQA) is disordered.

This sequence belongs to the catalase family. Heme serves as cofactor.

It carries out the reaction 2 H2O2 = O2 + 2 H2O. Functionally, decomposes hydrogen peroxide into water and oxygen; serves to protect cells from the toxic effects of hydrogen peroxide. In Onchocerca volvulus endobacterium, this protein is Catalase (cat).